A 337-amino-acid chain; its full sequence is RNA 3'-terminal phosphate cyclase (337 aa).

ATP is bound by residues Q101 and 282–285; that span reads HMSD. H306 functions as the Tele-AMP-histidine intermediate in the catalytic mechanism.

It belongs to the RNA 3'-terminal cyclase family. Type 1 subfamily.

It localises to the cytoplasm. The catalysed reaction is a 3'-end 3'-phospho-ribonucleotide-RNA + ATP = a 3'-end 2',3'-cyclophospho-ribonucleotide-RNA + AMP + diphosphate. In terms of biological role, catalyzes the conversion of 3'-phosphate to a 2',3'-cyclic phosphodiester at the end of RNA. The mechanism of action of the enzyme occurs in 3 steps: (A) adenylation of the enzyme by ATP; (B) transfer of adenylate to an RNA-N3'P to produce RNA-N3'PP5'A; (C) and attack of the adjacent 2'-hydroxyl on the 3'-phosphorus in the diester linkage to produce the cyclic end product. The biological role of this enzyme is unknown but it is likely to function in some aspects of cellular RNA processing. In Saccharolobus solfataricus (strain ATCC 35092 / DSM 1617 / JCM 11322 / P2) (Sulfolobus solfataricus), this protein is RNA 3'-terminal phosphate cyclase (rtcA).